We begin with the raw amino-acid sequence, 245 residues long: DNA polymerase sliding clamp (245 aa).

This sequence belongs to the PCNA family. As to quaternary structure, homotrimer. The subunits circularize to form a toroid; DNA passes through its center. Replication factor C (RFC) is required to load the toroid on the DNA.

In terms of biological role, sliding clamp subunit that acts as a moving platform for DNA processing. Responsible for tethering the catalytic subunit of DNA polymerase and other proteins to DNA during high-speed replication. This is DNA polymerase sliding clamp from Archaeoglobus fulgidus (strain ATCC 49558 / DSM 4304 / JCM 9628 / NBRC 100126 / VC-16).